Consider the following 542-residue polypeptide: Phosphoacetylglucosamine mutase (542 aa).

The residue at position 1 (Met-1) is an N-acetylmethionine. Thr-62 carries the post-translational modification Phosphothreonine. The active-site Phosphoserine intermediate is Ser-64. Mg(2+)-binding residues include Ser-64, Asp-276, Asp-278, and Asp-280. Ser-64 bears the Phosphoserine mark. Residues 370–372 (EAN), 496–500 (RPSGT), and Arg-505 contribute to the substrate site.

This sequence belongs to the phosphohexose mutase family. The cofactor is Mg(2+).

It catalyses the reaction N-acetyl-alpha-D-glucosamine 1-phosphate = N-acetyl-D-glucosamine 6-phosphate. The protein operates within nucleotide-sugar biosynthesis; UDP-N-acetyl-alpha-D-glucosamine biosynthesis; N-acetyl-alpha-D-glucosamine 1-phosphate from alpha-D-glucosamine 6-phosphate (route I): step 2/2. With respect to regulation, inhibited by Mn(2+), Cd(2+), Zn(2+), Cu(2+) and Be(2+). In terms of biological role, catalyzes the conversion of GlcNAc-6-P into GlcNAc-1-P during the synthesis of uridine diphosphate/UDP-GlcNAc, a sugar nucleotide critical to multiple glycosylation pathways including protein N- and O-glycosylation. This Sus scrofa (Pig) protein is Phosphoacetylglucosamine mutase.